Consider the following 90-residue polypeptide: MANKTFEELFTELQLKAAEGDPATSRTAELVDKGVHAIGKKVVEEAAEVWMAAEYEGKEAAAEEISQLLYHVQVMMVARGISLDDVYAHL.

It belongs to the PRA-PH family.

It is found in the cytoplasm. It carries out the reaction 1-(5-phospho-beta-D-ribosyl)-ATP + H2O = 1-(5-phospho-beta-D-ribosyl)-5'-AMP + diphosphate + H(+). Its pathway is amino-acid biosynthesis; L-histidine biosynthesis; L-histidine from 5-phospho-alpha-D-ribose 1-diphosphate: step 2/9. The sequence is that of Phosphoribosyl-ATP pyrophosphatase from Streptomyces griseus subsp. griseus (strain JCM 4626 / CBS 651.72 / NBRC 13350 / KCC S-0626 / ISP 5235).